Here is a 388-residue protein sequence, read N- to C-terminus: Succinate--CoA ligase [ADP-forming] subunit beta (388 aa).

Positions 9–244 (KQLFAEYGLP…PSQDDPREAH (236 aa)) constitute an ATP-grasp domain. Residues K46, 53 to 55 (GRG), E99, T102, and E107 each bind ATP. Mg(2+) contacts are provided by N199 and D213. Residues N264 and 321–323 (GIV) each bind substrate.

It belongs to the succinate/malate CoA ligase beta subunit family. Heterotetramer of two alpha and two beta subunits. Mg(2+) is required as a cofactor.

It catalyses the reaction succinate + ATP + CoA = succinyl-CoA + ADP + phosphate. It carries out the reaction GTP + succinate + CoA = succinyl-CoA + GDP + phosphate. It participates in carbohydrate metabolism; tricarboxylic acid cycle; succinate from succinyl-CoA (ligase route): step 1/1. Succinyl-CoA synthetase functions in the citric acid cycle (TCA), coupling the hydrolysis of succinyl-CoA to the synthesis of either ATP or GTP and thus represents the only step of substrate-level phosphorylation in the TCA. The beta subunit provides nucleotide specificity of the enzyme and binds the substrate succinate, while the binding sites for coenzyme A and phosphate are found in the alpha subunit. This is Succinate--CoA ligase [ADP-forming] subunit beta from Stutzerimonas stutzeri (strain A1501) (Pseudomonas stutzeri).